Here is a 244-residue protein sequence, read N- to C-terminus: Ribosomal RNA large subunit methyltransferase E (244 aa).

Positions 1–23 are disordered; that stretch reads MATGGKKSAGRTTGSGPAGGSRN. The S-adenosyl-L-methionine site is built by glycine 91, tryptophan 93, aspartate 116, aspartate 132, and aspartate 156. The active-site Proton acceptor is the lysine 196.

It belongs to the class I-like SAM-binding methyltransferase superfamily. RNA methyltransferase RlmE family.

Its subcellular location is the cytoplasm. The enzyme catalyses uridine(2552) in 23S rRNA + S-adenosyl-L-methionine = 2'-O-methyluridine(2552) in 23S rRNA + S-adenosyl-L-homocysteine + H(+). Specifically methylates the uridine in position 2552 of 23S rRNA at the 2'-O position of the ribose in the fully assembled 50S ribosomal subunit. The polypeptide is Ribosomal RNA large subunit methyltransferase E (Paramagnetospirillum magneticum (strain ATCC 700264 / AMB-1) (Magnetospirillum magneticum)).